Reading from the N-terminus, the 399-residue chain is Octopine dehydrogenase (399 aa).

NADH-binding positions include 10–13 (GGNG) and 35–38 (FADE). Positions 118 and 143 each coordinate pyruvate. Residue Gln118 coordinates substrate. Cys148 lines the NAD(+) pocket. Position 206 (Met206) interacts with L-arginine. Position 212 (His212) interacts with pyruvate. The active site involves His212. Position 324 (Arg324) interacts with NAD(+).

Belongs to the lysopine/nopaline/octopine/opine/vitopine dehydrogenases family.

The enzyme catalyses D-octopine + NAD(+) + H2O = L-arginine + pyruvate + NADH + H(+). Agmatine acts as a competitive inhibitor of the condensation reaction where the L-arginine and agmatine substrates compete for the same site. Catalyzes the reverse reaction of octopine dehydrogenation. Acts on L-arginine in preference to other substrates such as canavanine, cysteine, L-alanine, ornithine or norvaline, owing to the presence of the positively charged guanidium group. This chain is Octopine dehydrogenase, found in Pecten maximus (King scallop).